Consider the following 558-residue polypeptide: MRIVEQIKSEIRQALADAVSRAVAAGALVGPAPEVFLETPKAREHGDFATNLAMVMARQEKKAPRVIAQAIVDHLQTEGTWIESAEIAGPGFINLRLRQGWVHQVLPAIQAEGADYGKSDHGGKQRILLEYVSANPTGPMVLVQARAGAFGSSLARLLNWAGYECHTEFYVNDAGNQVKILARTVDLRAQELRGATVEIPEGYYPGEDVIDCARALLEQYPDFLEKPEEERLAFLERWAPEYFRSGHERVLRSYGVEFDRWFSERSLREAGAPARLVEWLKERGEAYEKDGAVWMRTTAYGDDKDRVLVKSDGEYTYFAADACYHKDKYDRGYATLIDILGQDHHGYLGRMKAMVECLGHPRDSLEILFTQMVRLFKDGQEFRMSKRRGNYVTLEDLLEQVSVDAARYFFLMRSLDTHMDFDLDLANLKSSDNPVFYVQYAHARICSILRQAREQGLEVPAASEVDTALLADESEVELMRKLAEFPEEIIGAADAREVHRIPRYLNELATLFHQFYSRCRVVSDDVPLSRARLLLVDCTRTVLANALGILGVSAPERM.

A 'HIGH' region motif is present at residues 134 to 144 (ANPTGPMVLVQ).

This sequence belongs to the class-I aminoacyl-tRNA synthetase family. As to quaternary structure, monomer.

It localises to the cytoplasm. The enzyme catalyses tRNA(Arg) + L-arginine + ATP = L-arginyl-tRNA(Arg) + AMP + diphosphate. This chain is Arginine--tRNA ligase, found in Symbiobacterium thermophilum (strain DSM 24528 / JCM 14929 / IAM 14863 / T).